The following is a 461-amino-acid chain: Homogentisate 1,2-dioxygenase (461 aa).

The Fe cation site is built by His341, Glu347, and His377.

It belongs to the homogentisate dioxygenase family. Requires Fe cation as cofactor.

The catalysed reaction is homogentisate + O2 = 4-maleylacetoacetate + H(+). Its pathway is amino-acid degradation; L-phenylalanine degradation; acetoacetate and fumarate from L-phenylalanine: step 4/6. The protein is Homogentisate 1,2-dioxygenase (HGO) of Arabidopsis thaliana (Mouse-ear cress).